The sequence spans 167 residues: Epithelial membrane protein 2 (167 aa).

The chain crosses the membrane as a helical span at residues 1 to 21 (MLVLLAFIIVFHITSAALLLV). Asparagine 44, asparagine 47, and asparagine 52 each carry an N-linked (GlcNAc...) asparagine glycan. Transmembrane regions (helical) follow at residues 67–87 (TMIL…LQLF), 95–115 (FVLT…AASI), and 143–163 (FILA…YLIL).

This sequence belongs to the PMP-22/EMP/MP20 family. In terms of assembly, interacts with PTK2; regulates PTK2 activation and localization. Interacts with ITGB3; regulates the levels of the heterodimer ITGA5-ITGB3 integrin surface expression. Interacts with P2RX7 (via C-terminus). Interacts with ITGB1; the interaction may be direct or indirect and ITGB1 has a heterodimer form.

The protein resides in the golgi apparatus membrane. Its subcellular location is the cell membrane. It is found in the apical cell membrane. It localises to the membrane raft. The protein localises to the cytoplasm. The protein resides in the nucleus. Its subcellular location is the perinuclear region. In terms of biological role, functions as a key regulator of cell membrane composition by regulating protein surface expression. Also, plays a role in regulation of processes including cell migration, cell proliferation, cell contraction and cell adhesion. Regulates transepithelial migration of neutrophils into the alveolar lumen, potentially via mediation of cell surface expression of adhesion markers and lipid raft formation. Negatively regulates caveolae formation by reducing CAV1 expression and CAV1 amount by increasing lysosomal degradation. Facilitates surface trafficking and the formation of lipid rafts bearing GPI-anchor proteins. Regulates surface expression of MHC1 and ICAM1 proteins increasing susceptibility to T-cell mediated cytotoxicity. Regulates the plasma membrane expression of the integrin heterodimers ITGA6-ITGB1, ITGA5-ITGB3 and ITGA5-ITGB1 resulting in modulation of cell-matrix adhesion. Also regulates many processes through PTK2. Regulates blood vessel endothelial cell migration and angiogenesis by regulating VEGF protein expression through PTK2 activation. Regulates cell migration and cell contraction through PTK2 and SRC activation. Regulates focal adhesion density, F-actin conformation and cell adhesion capacity through interaction with PTK2. Positively regulates cell proliferation. Plays a role during cell death and cell blebbing. Promotes angiogenesis and vasculogenesis through induction of VEGFA via a HIF1A-dependent pathway. Also plays a role in embryo implantation by regulating surface trafficking of integrin heterodimer ITGA5-ITGB3. Plays a role in placental angiogenesis and uterine natural killer cell regulation at the maternal-fetal placental interface, however not required in the maternal tissues for a viable pregnancy. Involved in the early stages of embryogenic development and cardiogenesis, potentially via regulation of epithelial-mesenchymal transition timing. May play a role in glomerular filtration. The chain is Epithelial membrane protein 2 (EMP2) from Bos taurus (Bovine).